We begin with the raw amino-acid sequence, 666 residues long: DNA mismatch repair protein MutL (666 aa).

It belongs to the DNA mismatch repair MutL/HexB family.

In terms of biological role, this protein is involved in the repair of mismatches in DNA. It is required for dam-dependent methyl-directed DNA mismatch repair. May act as a 'molecular matchmaker', a protein that promotes the formation of a stable complex between two or more DNA-binding proteins in an ATP-dependent manner without itself being part of a final effector complex. The polypeptide is DNA mismatch repair protein MutL (Clostridium botulinum (strain Okra / Type B1)).